We begin with the raw amino-acid sequence, 323 residues long: MADAPTRATTSRVDSDLDAQSPAADLVRVYLNGIGKTALLNAAGEVELAKRIEAGLYAEHLLETRKRLGENRKRDLAAVVRDGEAARRHLLEANLRLVVSLAKRYTGRGMPLLDLIQEGNLGLIRAMEKFDYTKGFKFSTYATWWIRQAITRGMADQSRTIRLPVHLVEQVNKLARIKREMHQHLGREATDEELAAESGIPIDKINDLLEHSRDPVSLDMPVGSEEEAPLGDFIEDAEAMSAENAVIAELLHTDIRSVLATLDEREHQVIRLRFGLDDGQPRTLDQIGKLFGLSRERVRQIERDVMSKLRHGERADRLRSYAS.

The segment at 1-228 is sufficient to interact with RbpA; sequence MADAPTRATT…DMPVGSEEEA (228 aa). The segment at 25–59 is sigma-70 factor domain-1; it reads DLVRVYLNGIGKTALLNAAGEVELAKRIEAGLYAE. The interval 90 to 160 is sigma-70 factor domain-2; sequence LLEANLRLVV…TRGMADQSRT (71 aa). The Polymerase core binding signature appears at 114–117; it reads DLIQ. The segment at 169 to 245 is sigma-70 factor domain-3; it reads EQVNKLARIK…DAEAMSAENA (77 aa). The sigma-70 factor domain-4 stretch occupies residues 258–311; sequence VLATLDEREHQVIRLRFGLDDGQPRTLDQIGKLFGLSRERVRQIERDVMSKLRH. The segment at residues 284–303 is a DNA-binding region (H-T-H motif); it reads LDQIGKLFGLSRERVRQIER.

This sequence belongs to the sigma-70 factor family. In terms of assembly, monomer. Interacts transiently with the RNA polymerase catalytic core formed by RpoA, RpoB, RpoC and RpoZ (2 alpha, 1 beta, 1 beta' and 1 omega subunit) to form the RNA polymerase holoenzyme that can initiate transcription.

Sigma factors are initiation factors that promote the attachment of RNA polymerase to specific initiation sites and are then released. A non-essential principal sigma factor that responds to cell envelope stress and hypoxia. The chain is RNA polymerase sigma factor SigB (sigB) from Mycobacterium tuberculosis (strain CDC 1551 / Oshkosh).